The chain runs to 505 residues: Peroxisome proliferator-activated receptor gamma (505 aa).

O-linked (GlcNAc) threonine glycosylation is present at Thr-84. A Phosphoserine modification is found at Ser-112. A DNA-binding region (nuclear receptor) is located at residues 136 to 210; it reads AIECRVCGDK…VGMSHNAIRF (75 aa). NR C4-type zinc fingers lie at residues 139–159 and 176–198; these read CRVC…CEGC and CDLN…FQKC. The interaction with FAM120B stretch occupies residues 205 to 280; it reads HNAIRFGRMP…DKSPFVIYDM (76 aa). The NR LBD domain maps to 238–503; the sequence is DLRALAKHLY…HPLLQEIYKD (266 aa). Residue Lys-252 forms a Glycyl lysine isopeptide (Lys-Gly) (interchain with G-Cter in ubiquitin) linkage. Rosiglitazone-binding positions include 314 to 317, His-351, His-477, and Tyr-501; that span reads QFRS. The 9aaTAD signature appears at 495–503; sequence PLLQEIYKD.

This sequence belongs to the nuclear hormone receptor family. NR1 subfamily. As to quaternary structure, interacts with FOXO1 (acetylated form). Heterodimer with other nuclear receptors, such as RXRA. The heterodimer with the retinoic acid receptor RXRA is called adipocyte-specific transcription factor ARF6. Interacts with NCOA6 coactivator, leading to a strong increase in transcription of target genes. Interacts with coactivator PPARBP, leading to a mild increase in transcription of target genes. Interacts with NOCA7 in a ligand-inducible manner. Interacts with NCOA1 and NCOA2 LXXLL motifs. Interacts with ASXL1, ASXL2, DNTTIP2, FAM120B, MAP2K1/MEK1, NR0B2, PDPK1, PRDM16, PRMT2 and TGFB1I1. Interacts (when activated by agonist) with PPP5C. Interacts with HELZ2 and THRAP3; the interaction stimulates the transcriptional activity of PPARG. Interacts with PER2, the interaction is ligand dependent and blocks PPARG recruitment to target promoters. Interacts with NOCT. Interacts with ACTN4. Interacts (when in the liganded conformation) with GPS2. Interacts with CRY1 and CRY2 in a ligand-dependent manner. In the absence of hormonal ligand, interacts with TACC1. In macrophages, interacts with PAQR3 and STUB1; the interactions promote PPARG poylubiquitination and STUB1-mediated degradation. In terms of processing, O-GlcNAcylation at Thr-84 reduces transcriptional activity in adipocytes. Post-translationally, phosphorylated in basal conditions and dephosphorylated when treated with the ligand. May be dephosphorylated by PPP5C. The phosphorylated form may be inactive and dephosphorylation at Ser-112 induces adipogenic activity. Ubiquitinated by E3 ubiquitin-protein ligase complex containing FBXO9; leading to proteasomal degradation. Ubiquitinated at Lys-252 by TRIM55 leading to proteasomal degradation. Ubiquitinated by E3 ubiquitin-protein ligase STUB1/CHIP; leading to proteasomal degradation. Highest expression in adipose tissue. Lower in skeletal muscle, spleen, heart and liver. Also detectable in placenta, lung and ovary.

Its subcellular location is the nucleus. The protein resides in the cytoplasm. Its activity is regulated as follows. PDPK1 activates its transcriptional activity independently of its kinase activity. Functionally, nuclear receptor that binds peroxisome proliferators such as hypolipidemic drugs and fatty acids. Once activated by a ligand, the nuclear receptor binds to DNA specific PPAR response elements (PPRE) and modulates the transcription of its target genes, such as acyl-CoA oxidase. It therefore controls the peroxisomal beta-oxidation pathway of fatty acids. Key regulator of adipocyte differentiation and glucose homeostasis. ARF6 acts as a key regulator of the tissue-specific adipocyte P2 (aP2) enhancer. Acts as a critical regulator of gut homeostasis by suppressing NF-kappa-B-mediated pro-inflammatory responses. Plays a role in the regulation of cardiovascular circadian rhythms by regulating the transcription of BMAL1 in the blood vessels. In terms of biological role, (Microbial infection) Upon treatment with M.tuberculosis or its lipoprotein LpqH, phosphorylation of MAPK p38 and IL-6 production are modulated, probably via this protein. The polypeptide is Peroxisome proliferator-activated receptor gamma (PPARG) (Homo sapiens (Human)).